The primary structure comprises 316 residues: Inactive peptidyl-prolyl cis-trans isomerase FKBP6 (316 aa).

A PPIase FKBP-type domain is found at 43–132 (DASVLVKYSG…LFEIELLDFL (90 aa)). TPR repeat units lie at residues 160-193 (AATE…LHRR), 208-241 (LLVL…DQKN), and 242-275 (AKAL…QPFN).

Belongs to the FKBP6 family. In terms of assembly, interacts with HSP72/HSPA2 and CLTC. Interacts with GAPDH; leading to inhibit GAPDH catalytic activity. Interacts (via TPR repeats) with HSP90. As to expression, specifically expressed in testis and sperm.

The protein localises to the cytoplasm. It localises to the cytosol. Its subcellular location is the nucleus. Its function is as follows. Co-chaperone required during spermatogenesis to repress transposable elements and prevent their mobilization, which is essential for the germline integrity. Acts via the piRNA metabolic process, which mediates the repression of transposable elements during meiosis by forming complexes composed of piRNAs and Piwi proteins and govern the methylation and subsequent repression of transposons. Acts as a co-chaperone via its interaction with HSP90 and is required for the piRNA amplification process, the secondary piRNA biogenesis. May be required together with HSP90 in removal of 16 nucleotide ping-pong by-products from Piwi complexes, possibly facilitating turnover of Piwi complexes. The chain is Inactive peptidyl-prolyl cis-trans isomerase FKBP6 (FKBP6) from Equus caballus (Horse).